Here is a 290-residue protein sequence, read N- to C-terminus: Release factor glutamine methyltransferase (290 aa).

2 residues coordinate S-adenosyl-L-methionine: D140 and N181. 181–184 (NPPY) serves as a coordination point for substrate.

Belongs to the protein N5-glutamine methyltransferase family. PrmC subfamily.

The enzyme catalyses L-glutaminyl-[peptide chain release factor] + S-adenosyl-L-methionine = N(5)-methyl-L-glutaminyl-[peptide chain release factor] + S-adenosyl-L-homocysteine + H(+). Its function is as follows. Methylates the class 1 translation termination release factors RF1/PrfA and RF2/PrfB on the glutamine residue of the universally conserved GGQ motif. The sequence is that of Release factor glutamine methyltransferase from Chlamydia trachomatis serovar D (strain ATCC VR-885 / DSM 19411 / UW-3/Cx).